Here is a 422-residue protein sequence, read N- to C-terminus: UDP-N-acetylglucosamine 1-carboxyvinyltransferase (422 aa).

23–24 contacts phosphoenolpyruvate; that stretch reads KN. UDP-N-acetyl-alpha-D-glucosamine is bound at residue arginine 92. Residue cysteine 116 is the Proton donor of the active site. The residue at position 116 (cysteine 116) is a 2-(S-cysteinyl)pyruvic acid O-phosphothioketal. Residues 121 to 125, 161 to 164, aspartate 306, and isoleucine 328 contribute to the UDP-N-acetyl-alpha-D-glucosamine site; these read RPVDL and KVSV.

The protein belongs to the EPSP synthase family. MurA subfamily.

It localises to the cytoplasm. The enzyme catalyses phosphoenolpyruvate + UDP-N-acetyl-alpha-D-glucosamine = UDP-N-acetyl-3-O-(1-carboxyvinyl)-alpha-D-glucosamine + phosphate. Its pathway is cell wall biogenesis; peptidoglycan biosynthesis. Functionally, cell wall formation. Adds enolpyruvyl to UDP-N-acetylglucosamine. The polypeptide is UDP-N-acetylglucosamine 1-carboxyvinyltransferase (Aliivibrio fischeri (strain ATCC 700601 / ES114) (Vibrio fischeri)).